Consider the following 547-residue polypeptide: Inositol 1,4,5-trisphosphate receptor-interacting protein-like 1 (547 aa).

A signal peptide spans 1–16 (MAVISLLFLAVMYVVH). Topologically, residues 17–96 (HPLMVSDRMD…PFQASGQDGG (80 aa)) are extracellular. Positions 28–66 (DTLARSRQLEKRMSEEMRQLEIEFEERSRAAEEKQKAEN) form a coiled coil. Residues 97-117 (PLGWMLGNLWNAGLFCLFLIF) form a helical membrane-spanning segment. Residues 118-547 (ELLRQNMQHE…LPCSPLAGGL (430 aa)) are Cytoplasmic-facing.

Belongs to the ITPRIP family.

It is found in the cell membrane. In terms of biological role, functions as a ligand of CD3E, inhibiting TCR-CD3 complex signaling to regulate T cell activation. Induces stable CD3E-NCK1 binding, thereby preventing the CD3E-ZAP70 interaction and subsequently inhibiting the activation of the downstream ERK-NFkB signaling cascade and calcium influx. This is Inositol 1,4,5-trisphosphate receptor-interacting protein-like 1 (Itpripl1) from Rattus norvegicus (Rat).